A 716-amino-acid polypeptide reads, in one-letter code: Myogenesis-regulating glycosidase (716 aa).

Over residues 1-11 (MSQNLQETSQA) the composition is skewed to polar residues. The interval 1-26 (MSQNLQETSQAYPRHRPGSHAGPKSL) is disordered. The Cytoplasmic segment spans residues 1-55 (MSQNLQETSQAYPRHRPGSHAGPKSLKVTPRATMYTFLPDNFSPAKPKPTKELRP). Residues 56–76 (LLCSAVLGLLLVLAAVVAWCY) traverse the membrane as a helical; Signal-anchor for type II membrane protein segment. At 77-716 (YSASLRKAER…DEVAYFTWAS (640 aa)) the chain is on the extracellular side. Asn-239, Asn-249, and Asn-455 each carry an N-linked (GlcNAc...) asparagine glycan. Catalysis depends on residues Asp-462 and Glu-465. Catalysis depends on Asp-527, which acts as the Proton donor.

It belongs to the glycosyl hydrolase 31 family. As to quaternary structure, interacts with IGF2; this interaction is required for IGF2 secretion. As to expression, expressed in brain, liver, spleen, skeletal muscle, heart, lung and kidney. High expression is observed in the cerebellum, specifically in astrocytes. Highly expressed in skeletal muscle (at protein level).

Its subcellular location is the nucleus membrane. It is found in the endoplasmic reticulum membrane. Putative glycosidase. Promotes myogenesis by activating AKT signaling through the maturation and secretion of IGF2. The sequence is that of Myogenesis-regulating glycosidase (Myorg) from Mus musculus (Mouse).